Reading from the N-terminus, the 451-residue chain is MSTSHGYRASWWTYILHQVPHTNFQFEVVDNQFAPQEWSYQQALLFLASIAGLCLAISLVLICVYLIKFCCCASQEDDDSKSHRVCCVTWSCVAAVIICCAGIGIGFYGNSETNDGVYQVTYSLMNANHTLTSINLLVSDTVELLSSVVKSDLTQLEEIFSTRTEFVVMIRNTRRQVESVAQQLTEISSFFWKGAELNPSALAEQVNFIEDYRWLAYILLLLLDLIICLFTLLSLAKQIKWLVIVMTVVSFFVLLLSWGSMGLEMATAVGLSDFCSDPDAYVMNQTQMITNINPDILQYYISCNQDVTNPFRQRLTMSQRALSNIHSQLHGLEREAVPQFPTAERNVLVVQGMLNTTEGNFHHLVALLNCRGLHKDYVDALKGLCYDGMEGILFLLLFSFLSALSFTAAVCSLPRAWKRFRNRDLDYDDMDEDDPFNPQESKRFVQWQSSI.

The Extracellular segment spans residues 1 to 43 (MSTSHGYRASWWTYILHQVPHTNFQFEVVDNQFAPQEWSYQQA). The helical transmembrane segment at 44–64 (LLFLASIAGLCLAISLVLICV) threads the bilayer. Topologically, residues 65–86 (YLIKFCCCASQEDDDSKSHRVC) are cytoplasmic. Residues 87 to 107 (CVTWSCVAAVIICCAGIGIGF) form a helical membrane-spanning segment. Residues 108-214 (YGNSETNDGV…QVNFIEDYRW (107 aa)) are Extracellular-facing. Asn-128 carries an N-linked (GlcNAc...) asparagine glycan. A helical membrane pass occupies residues 215 to 235 (LAYILLLLLDLIICLFTLLSL). The Cytoplasmic segment spans residues 236 to 240 (AKQIK). Residues 241–261 (WLVIVMTVVSFFVLLLSWGSM) form a helical membrane-spanning segment. The Extracellular portion of the chain corresponds to 262 to 390 (GLEMATAVGL…LKGLCYDGME (129 aa)). Intrachain disulfides connect Cys-275–Cys-385 and Cys-303–Cys-370. 2 N-linked (GlcNAc...) asparagine glycosylation sites follow: Asn-284 and Asn-355. Residues 391–411 (GILFLLLFSFLSALSFTAAVC) traverse the membrane as a helical segment. The Cytoplasmic segment spans residues 412-451 (SLPRAWKRFRNRDLDYDDMDEDDPFNPQESKRFVQWQSSI).

The protein belongs to the tweety family. As to quaternary structure, homotetramer; disulfide-linked. Homodimer.

Its subcellular location is the cell membrane. The enzyme catalyses chloride(in) = chloride(out). It catalyses the reaction L-glutamate(out) = L-glutamate(in). In terms of biological role, may act as a calcium-independent, swelling-dependent volume-regulated anion channel (VRAC-swell) which plays a pivotal role in the process of regulatory volume decrease (RVD) in the brain through the efflux of anions like chloride and organic osmolytes like glutamate. The chain is Protein tweety homolog 1-B (ttyh1-b) from Xenopus laevis (African clawed frog).